The chain runs to 281 residues: MTEILDGKAVAKTINEQTKARVAKQKRPVTLAVIYDPSNDGSQLYVGMKSRQAAKLGIVTRDIPISTDATTESVIQLVEELNDDESITGILVQSPLAKGIKERQIFSAVAPHKDADGLGATVQGMLFGDSLENYTVAATPQGVMTLLAQYNISLKGKNAVVVGRSQLFGRPMFALLTNADATVTLAHRYTEPTTLKALLKNADIVVVGVGIPNFIQGEDLKKGATVIDVGMNVVDGKATGDVNFSSAQGIAGYITPVPGGVGPMTIATLLENTVTLAEQHQ.

163 to 165 (GRS) contacts NADP(+).

Belongs to the tetrahydrofolate dehydrogenase/cyclohydrolase family. Homodimer.

The enzyme catalyses (6R)-5,10-methylene-5,6,7,8-tetrahydrofolate + NADP(+) = (6R)-5,10-methenyltetrahydrofolate + NADPH. The catalysed reaction is (6R)-5,10-methenyltetrahydrofolate + H2O = (6R)-10-formyltetrahydrofolate + H(+). The protein operates within one-carbon metabolism; tetrahydrofolate interconversion. Its function is as follows. Catalyzes the oxidation of 5,10-methylenetetrahydrofolate to 5,10-methenyltetrahydrofolate and then the hydrolysis of 5,10-methenyltetrahydrofolate to 10-formyltetrahydrofolate. This Leuconostoc mesenteroides subsp. mesenteroides (strain ATCC 8293 / DSM 20343 / BCRC 11652 / CCM 1803 / JCM 6124 / NCDO 523 / NBRC 100496 / NCIMB 8023 / NCTC 12954 / NRRL B-1118 / 37Y) protein is Bifunctional protein FolD.